Consider the following 205-residue polypeptide: Imidazole glycerol phosphate synthase subunit HisH (205 aa).

Residues 1–205 (MITIVDYQMG…RFATAPVEVA (205 aa)) enclose the Glutamine amidotransferase type-1 domain. Cys-79 acts as the Nucleophile in catalysis. Active-site residues include His-182 and Glu-184.

Heterodimer of HisH and HisF.

The protein resides in the cytoplasm. The enzyme catalyses 5-[(5-phospho-1-deoxy-D-ribulos-1-ylimino)methylamino]-1-(5-phospho-beta-D-ribosyl)imidazole-4-carboxamide + L-glutamine = D-erythro-1-(imidazol-4-yl)glycerol 3-phosphate + 5-amino-1-(5-phospho-beta-D-ribosyl)imidazole-4-carboxamide + L-glutamate + H(+). It catalyses the reaction L-glutamine + H2O = L-glutamate + NH4(+). It functions in the pathway amino-acid biosynthesis; L-histidine biosynthesis; L-histidine from 5-phospho-alpha-D-ribose 1-diphosphate: step 5/9. Its function is as follows. IGPS catalyzes the conversion of PRFAR and glutamine to IGP, AICAR and glutamate. The HisH subunit catalyzes the hydrolysis of glutamine to glutamate and ammonia as part of the synthesis of IGP and AICAR. The resulting ammonia molecule is channeled to the active site of HisF. This is Imidazole glycerol phosphate synthase subunit HisH from Rhodopirellula baltica (strain DSM 10527 / NCIMB 13988 / SH1).